Reading from the N-terminus, the 612-residue chain is Dihydroxy-acid dehydratase (612 aa).

Aspartate 81 is a binding site for Mg(2+). Residue cysteine 122 coordinates [2Fe-2S] cluster. Positions 123 and 124 each coordinate Mg(2+). At lysine 124 the chain carries N6-carboxylysine. Residue cysteine 193 participates in [2Fe-2S] cluster binding. Mg(2+) is bound at residue glutamate 489. Serine 515 acts as the Proton acceptor in catalysis.

It belongs to the IlvD/Edd family. In terms of assembly, homodimer. It depends on [2Fe-2S] cluster as a cofactor. Mg(2+) serves as cofactor.

The enzyme catalyses (2R)-2,3-dihydroxy-3-methylbutanoate = 3-methyl-2-oxobutanoate + H2O. It catalyses the reaction (2R,3R)-2,3-dihydroxy-3-methylpentanoate = (S)-3-methyl-2-oxopentanoate + H2O. It participates in amino-acid biosynthesis; L-isoleucine biosynthesis; L-isoleucine from 2-oxobutanoate: step 3/4. The protein operates within amino-acid biosynthesis; L-valine biosynthesis; L-valine from pyruvate: step 3/4. In terms of biological role, functions in the biosynthesis of branched-chain amino acids. Catalyzes the dehydration of (2R,3R)-2,3-dihydroxy-3-methylpentanoate (2,3-dihydroxy-3-methylvalerate) into 2-oxo-3-methylpentanoate (2-oxo-3-methylvalerate) and of (2R)-2,3-dihydroxy-3-methylbutanoate (2,3-dihydroxyisovalerate) into 2-oxo-3-methylbutanoate (2-oxoisovalerate), the penultimate precursor to L-isoleucine and L-valine, respectively. In Xanthomonas euvesicatoria pv. vesicatoria (strain 85-10) (Xanthomonas campestris pv. vesicatoria), this protein is Dihydroxy-acid dehydratase.